A 385-amino-acid chain; its full sequence is Putative glutamate--cysteine ligase 2 (385 aa).

The protein belongs to the glutamate--cysteine ligase type 2 family. YbdK subfamily.

The enzyme catalyses L-cysteine + L-glutamate + ATP = gamma-L-glutamyl-L-cysteine + ADP + phosphate + H(+). ATP-dependent carboxylate-amine ligase which exhibits weak glutamate--cysteine ligase activity. In Herpetosiphon aurantiacus (strain ATCC 23779 / DSM 785 / 114-95), this protein is Putative glutamate--cysteine ligase 2.